A 371-amino-acid chain; its full sequence is NADH-ubiquinone oxidoreductase chain 1 (371 aa).

10 helical membrane-spanning segments follow: residues Ile7 to Val27, Pro44 to Leu64, Leu77 to Pro97, Leu109 to Gly129, Leu153 to Val173, Ala180 to Ala200, Ala226 to Leu246, Val263 to Val283, Gly302 to Leu322, and Phe338 to Leu358.

Belongs to the complex I subunit 1 family.

The protein resides in the mitochondrion inner membrane. It carries out the reaction a ubiquinone + NADH + 5 H(+)(in) = a ubiquinol + NAD(+) + 4 H(+)(out). Its function is as follows. Core subunit of the mitochondrial membrane respiratory chain NADH dehydrogenase (Complex I) that is believed to belong to the minimal assembly required for catalysis. Complex I functions in the transfer of electrons from NADH to the respiratory chain. The immediate electron acceptor for the enzyme is believed to be ubiquinone. The sequence is that of NADH-ubiquinone oxidoreductase chain 1 (ndh-1) from Neurospora crassa (strain ATCC 24698 / 74-OR23-1A / CBS 708.71 / DSM 1257 / FGSC 987).